The chain runs to 207 residues: Ribosomal RNA small subunit methyltransferase G (207 aa).

Residues Gly-73, Leu-78, 124 to 125, and Arg-139 contribute to the S-adenosyl-L-methionine site; that span reads VE.

It belongs to the methyltransferase superfamily. RNA methyltransferase RsmG family.

It localises to the cytoplasm. The catalysed reaction is guanosine(527) in 16S rRNA + S-adenosyl-L-methionine = N(7)-methylguanosine(527) in 16S rRNA + S-adenosyl-L-homocysteine. In terms of biological role, specifically methylates the N7 position of guanine in position 527 of 16S rRNA. The sequence is that of Ribosomal RNA small subunit methyltransferase G from Cronobacter sakazakii (strain ATCC BAA-894) (Enterobacter sakazakii).